The primary structure comprises 102 residues: Large ribosomal subunit protein bL21 (102 aa).

The protein belongs to the bacterial ribosomal protein bL21 family. In terms of assembly, part of the 50S ribosomal subunit. Contacts protein L20.

Functionally, this protein binds to 23S rRNA in the presence of protein L20. In Campylobacter jejuni subsp. doylei (strain ATCC BAA-1458 / RM4099 / 269.97), this protein is Large ribosomal subunit protein bL21.